A 296-amino-acid polypeptide reads, in one-letter code: 4-hydroxy-tetrahydrodipicolinate synthase (296 aa).

Pyruvate is bound at residue Thr-49. The Proton donor/acceptor role is filled by Tyr-137. Residue Lys-166 is the Schiff-base intermediate with substrate of the active site. Position 208 (Ile-208) interacts with pyruvate.

It belongs to the DapA family. Homotetramer; dimer of dimers.

It is found in the cytoplasm. The catalysed reaction is L-aspartate 4-semialdehyde + pyruvate = (2S,4S)-4-hydroxy-2,3,4,5-tetrahydrodipicolinate + H2O + H(+). It functions in the pathway amino-acid biosynthesis; L-lysine biosynthesis via DAP pathway; (S)-tetrahydrodipicolinate from L-aspartate: step 3/4. In terms of biological role, catalyzes the condensation of (S)-aspartate-beta-semialdehyde [(S)-ASA] and pyruvate to 4-hydroxy-tetrahydrodipicolinate (HTPA). This is 4-hydroxy-tetrahydrodipicolinate synthase from Pelodictyon phaeoclathratiforme (strain DSM 5477 / BU-1).